A 1105-amino-acid polypeptide reads, in one-letter code: Probable diguanylate cyclase DgcE (1105 aa).

10 helical membrane-spanning segments follow: residues 9–29 (LIAL…SFIF), 38–58 (QFGT…VAFY), 64–84 (MWPG…ILLF), 88–108 (SLNM…AVLL), 127–147 (LALG…VLLT), 156–176 (FLIW…LGLL), 190–207 (LLFE…LSWL), 211–228 (YLPW…WSAV), 236–256 (FLIF…DPSL), and 270–290 (WLPF…MYAF). The region spanning 300–370 (SETHFRNAME…QQVEKLISGE (71 aa)) is the PAS 1 domain. PAC domains lie at 374–426 (YSME…VNQQ) and 501–552 (FKLE…ALFQ). The PAS 2 domain maps to 553 to 623 (EKERLHITLD…LMENIYSADT (71 aa)). Residues 626–680 (SAIEQDVVLHCRSGGSYDVHYSITPLSTLDGSNIGSVLVIQDVTESRKMLRQLSY) form the PAC 3 domain. Residues 712 to 845 (QRHALVFIDL…GRGRVTVYEP (134 aa)) enclose the GGDEF domain. A Mg(2+)-binding site is contributed by Asp-720. Positions 728, 733, and 737 each coordinate substrate. Asp-763 is a binding site for Mg(2+). Asp-763 serves as the catalytic Proton acceptor. Arg-783 provides a ligand contact to substrate. The EAL domain maps to 855-1104 (AAMSLDEQWR…LLVNSSYFAI (250 aa)).

Homodimer. Mg(2+) is required as a cofactor.

Its subcellular location is the cell inner membrane. The catalysed reaction is 2 GTP = 3',3'-c-di-GMP + 2 diphosphate. Its pathway is purine metabolism; 3',5'-cyclic di-GMP biosynthesis. Its function is as follows. Catalyzes the synthesis of cyclic-di-GMP (c-di-GMP) via the condensation of 2 GTP molecules. Involved in the control of the switch from cell motility to adhesion via regulation of cellular levels of c-di-GMP. Part of a signaling cascade that regulates curli biosynthesis. The cascade is composed of two c-di-GMP control modules, in which c-di-GMP controlled by the DgcE/PdeH pair (module I) regulates the activity of the DgcM/PdeR pair (module II), which in turn regulates activity of the transcription factor MlrA and expression of the master biofilm regulator csgD. The chain is Probable diguanylate cyclase DgcE from Escherichia coli (strain K12).